A 312-amino-acid chain; its full sequence is Olfactory receptor 7D2 (312 aa).

Residues 1–25 are Extracellular-facing; that stretch reads MEAGNQTGFLEFILLGLSEDPELQP. N-linked (GlcNAc...) asparagine glycosylation is present at Asn5. A helical transmembrane segment spans residues 26–46; sequence FIFGLFLSMYLVTVLGNLLII. Residues 47–54 lie on the Cytoplasmic side of the membrane; it reads LAISSDSH. A helical transmembrane segment spans residues 55–75; sequence LHTPMYFFLSNLSWVDICFST. Over 76 to 99 the chain is Extracellular; it reads CIVPKMLVNIQTENKAISYMDCLT. Cys97 and Cys189 are oxidised to a cystine. Residues 100 to 120 form a helical membrane-spanning segment; that stretch reads QVYFSMFFPILDTLLLTVMAY. Topologically, residues 121-139 are cytoplasmic; it reads DRFVAVCHPLHYMIIMNPH. The helical transmembrane segment at 140–160 threads the bilayer; the sequence is LCGLLVFVTWLIGVMTSLLHI. The Extracellular portion of the chain corresponds to 161–197; that stretch reads SLMMHLIFCKDFEIPHFFCELTYILQLACSDTFLNST. The chain crosses the membrane as a helical span at residues 198–217; the sequence is LIYFMTGVLGVFPLLGIIFS. The Cytoplasmic portion of the chain corresponds to 218–237; it reads YSRIASSIRKMSSSGGKQKA. The chain crosses the membrane as a helical span at residues 238–258; that stretch reads LSTCGSHLSVVSLFYGTGIGV. Residues 259–271 are Extracellular-facing; the sequence is HFTSAVTHSSQKI. The helical transmembrane segment at 272 to 292 threads the bilayer; that stretch reads SVASVMYTVVTPMLNPFIYSL. Topologically, residues 293-312 are cytoplasmic; it reads RNKDVKGALGSLLSRAASCL.

It belongs to the G-protein coupled receptor 1 family.

It localises to the cell membrane. Odorant receptor. This is Olfactory receptor 7D2 (OR7D2) from Homo sapiens (Human).